Here is a 950-residue protein sequence, read N- to C-terminus: Protein translocase subunit SecA (950 aa).

Residues Q87, 105-109, and D524 contribute to the ATP site; that span reads GEGKT. Residues 908 to 932 are disordered; it reads GAAPVPAEARNPNDPSTWGKVGRNE. Zn(2+) contacts are provided by C934, C936, C945, and H946.

Belongs to the SecA family. Monomer and homodimer. Part of the essential Sec protein translocation apparatus which comprises SecA, SecYEG and auxiliary proteins SecDF-YajC and YidC. Zn(2+) serves as cofactor.

It localises to the cell inner membrane. The protein localises to the cytoplasm. The enzyme catalyses ATP + H2O + cellular proteinSide 1 = ADP + phosphate + cellular proteinSide 2.. Its function is as follows. Part of the Sec protein translocase complex. Interacts with the SecYEG preprotein conducting channel. Has a central role in coupling the hydrolysis of ATP to the transfer of proteins into and across the cell membrane, serving both as a receptor for the preprotein-SecB complex and as an ATP-driven molecular motor driving the stepwise translocation of polypeptide chains across the membrane. The chain is Protein translocase subunit SecA from Bradyrhizobium sp. (strain BTAi1 / ATCC BAA-1182).